Reading from the N-terminus, the 283-residue chain is BTB/POZ domain-containing protein KCTD15 (283 aa).

Positions 1-33 (MPHRKERPSGSSLNAHGSSGTAEGGNMSRLSLT) are disordered. Polar residues predominate over residues 9 to 21 (SGSSLNAHGSSGT). A phosphoserine mark is found at Ser-31, Ser-35, and Ser-38. A BTB domain is found at 56–126 (APVHIDVGGH…LRTSKLLLPD (71 aa)).

Forms oligomers, predominantly homopentamers. Interacts with KCTD1, probably forming heteropentamers depending on its abundance in a cell-type dependent manner. Interacts with TFAP2A; this interaction inhibits TFAP2A transcriptional activation. As to expression, expressed in the cerebral cortex, cerebellum, and hypothalamus (at protein level). Expressed in the arcuate hypothalamic nucleus, the ventromedial hypothalamic nucleus and the accumbens nucleus of the ventral striatum.

Its subcellular location is the nucleus. Its function is as follows. During embryonic development, interferes with neural crest formation. Inhibits AP2 transcriptional activity by interaction with its activation domain. This Mus musculus (Mouse) protein is BTB/POZ domain-containing protein KCTD15 (Kctd15).